A 722-amino-acid polypeptide reads, in one-letter code: Protein Aster-A (722 aa).

The disordered stretch occupies residues 1 to 62; the sequence is MFDTTPHSGR…KSGVSGTLST (62 aa). Positions 8–18 are enriched in low complexity; sequence SGRSSPSSSPS. The region spanning 93–160 is the GRAM domain; it reads EDFRKLFSKL…KEVTCLKKEK (68 aa). A disordered region spans residues 256–336; the sequence is ISPSGAADHS…DGPTSSLGPL (81 aa). Residues Ser265, Ser269, Ser273, and Ser417 each carry the phosphoserine modification. Residues 369–540 enclose the VASt domain; that stretch reads SGRLLINSVF…ELAKAEKLSL (172 aa). Residues 561 to 600 form a disordered region; that stretch reads LSWRGHRDGPQHPDPDPCTQTSMHTSGSLSSRFSEPSVDQ. Residues 565-575 are compositionally biased toward basic and acidic residues; the sequence is GHRDGPQHPDP. A compositionally biased stretch (polar residues) spans 578-594; it reads CTQTSMHTSGSLSSRFS. Residues 609–629 traverse the membrane as a helical segment; sequence ALVLISIVLIVLIALNALLFY.

Highly expressed in the brain.

It localises to the endoplasmic reticulum membrane. Its subcellular location is the cell membrane. The protein resides in the cytoplasmic vesicle. It is found in the autophagosome. In terms of biological role, cholesterol transporter that mediates non-vesicular transport of cholesterol from the plasma membrane (PM) to the endoplasmic reticulum (ER). Contains unique domains for binding cholesterol and the PM, thereby serving as a molecular bridge for the transfer of cholesterol from the PM to the ER. Plays a crucial role in cholesterol homeostasis and has the unique ability to localize to the PM based on the level of membrane cholesterol. In lipid-poor conditions localizes to the ER membrane and in response to excess cholesterol in the PM is recruited to the endoplasmic reticulum-plasma membrane contact sites (EPCS) which is mediated by the GRAM domain. At the EPCS, the sterol-binding VASt/ASTER domain binds to the cholesterol in the PM and facilitates its transfer from the PM to ER. May play a role in tumor progression. Plays a role in autophagy regulation and is required for biogenesis of the autophagosome. This function in autophagy requires its cholesterol-transfer activity. The chain is Protein Aster-A from Mus musculus (Mouse).